A 244-amino-acid polypeptide reads, in one-letter code: 5-oxoprolinase subunit A (244 aa).

Belongs to the LamB/PxpA family. As to quaternary structure, forms a complex composed of PxpA, PxpB and PxpC.

It carries out the reaction 5-oxo-L-proline + ATP + 2 H2O = L-glutamate + ADP + phosphate + H(+). Its function is as follows. Catalyzes the cleavage of 5-oxoproline to form L-glutamate coupled to the hydrolysis of ATP to ADP and inorganic phosphate. The polypeptide is 5-oxoprolinase subunit A (Salmonella heidelberg (strain SL476)).